Consider the following 488-residue polypeptide: Pre-glycoprotein polyprotein GP complex (488 aa).

Gly2 is lipidated: N-myristoyl glycine; by host. Residues 2 to 17 (GQLFSFFEEVPNIIHE) lie on the Extracellular side of the membrane. The chain crosses the membrane as a helical span at residues 18 to 32 (AINIALIAVSLIAAL). A topological domain (cytoplasmic) is located at residue Lys33. A helical transmembrane segment spans residues 34-53 (GMINLWKSGLFQLIFFLTLA). Extracellular segments lie at residues 54–58 (GRSCS) and 59–427 (FRIG…TLVD). A Zn(2+)-binding site is contributed by Cys57. N-linked (GlcNAc...) asparagine; by host glycans are attached at residues Asn69, Asn88, Asn99, Asn125, Asn171, Asn178, and Asn222. 4 disulfides stabilise this stretch: Cys85–Cys229, Cys274–Cys287, Cys296–Cys305, and Cys359–Cys380. N-linked (GlcNAc...) asparagine; by host glycosylation is found at Asn360, Asn368, Asn385, and Asn390. The helical transmembrane segment at 428–448 (ICFWSTLFFTTTLFLHLVGFP) threads the bilayer. At 449 to 488 (THRHIRGEPCPLPHRLNSRGGCRCGKYPELKKPITWHKNH) the chain is on the cytoplasmic side. Zn(2+)-binding residues include His450, His452, Cys458, His462, Cys470, Cys472, and His488.

The protein belongs to the arenaviridae GPC protein family. In terms of assembly, homotetramer; disulfide-linked. Homotetramer. GP2 homotetramers bind through ionic interactions with GP1 homotetramers to form the GP complex together with the stable signal peptide. The GP-C polyprotein interacts with the host protease MBTPS1/SKI-1 resulting in the polyprotein processing. In terms of processing, specific enzymatic cleavages in vivo yield mature proteins. GP-C polyprotein is cleaved in the endoplasmic reticulum by the host protease MBTPS1. Only cleaved glycoprotein is incorporated into virions. The SSP remains stably associated with the GP complex following cleavage by signal peptidase and plays crucial roles in the trafficking of GP through the secretory pathway. Post-translationally, myristoylation is necessary for GP2-mediated fusion activity.

The protein resides in the virion membrane. It is found in the host endoplasmic reticulum membrane. The protein localises to the host Golgi apparatus membrane. It localises to the host cell membrane. Interacts with the host receptor. Mediates virus attachment to host TFRC. This attachment induces virion internalization predominantly through clathrin-mediated endocytosis. Functionally, class I viral fusion protein that directs fusion of viral and host endosomal membranes, leading to delivery of the nucleocapsid into the cytoplasm. Membrane fusion is mediated by irreversible conformational changes induced upon acidification in the endosome. Its function is as follows. Stable signal peptide (SSP): cleaved and functions as a signal peptide. In addition, it is also retained as the third component of the GP complex. The SSP is required for efficient glycoprotein expression, post-translational maturation cleavage of GP1 and GP2, glycoprotein transport to the cell surface plasma membrane, formation of infectious virus particles, and acid pH-dependent glycoprotein-mediated cell fusion. The polypeptide is Pre-glycoprotein polyprotein GP complex (Homo sapiens (Human)).